A 373-amino-acid polypeptide reads, in one-letter code: Probable jasmonic acid carboxyl methyltransferase 2 (373 aa).

An S-adenosyl-L-homocysteine-binding site is contributed by Y18. Q25 provides a ligand contact to jasmonate. Residues C59, N64, D96, L97, S135, and F136 each contribute to the S-adenosyl-L-homocysteine site. Jasmonate-binding residues include H156 and W157. Residues N174, D260, F262, and N263 each coordinate Mg(2+).

This sequence belongs to the methyltransferase superfamily. Type-7 methyltransferase family. The cofactor is Mg(2+).

It is found in the cytoplasm. It localises to the nucleus. It carries out the reaction jasmonate + S-adenosyl-L-methionine = methyl (-)-jasmonate + S-adenosyl-L-homocysteine. It functions in the pathway lipid metabolism; oxylipin biosynthesis. Its function is as follows. Catalyzes the methylation of jasmonate into methyljasmonate, a plant volatile that acts as an important cellular regulator mediating diverse developmental processes and defense responses. The chain is Probable jasmonic acid carboxyl methyltransferase 2 from Theobroma cacao (Cacao).